We begin with the raw amino-acid sequence, 156 residues long: Ribonuclease ageritin (156 aa).

An N-terminal signal peptide occupies residues 1–21; the sequence is MSESSTFTTAVVPEGEGVAPM. His-98 is an active-site residue. Asn-100 and Asn-139 each carry an N-linked (GlcNAc...) asparagine glycan.

Belongs to the ribotoxin-like family. Monomer. The cofactor is Mg(2+).

It localises to the vacuole lumen. The enzyme catalyses a 28S rRNA containing guanosine-adenosine pair + H2O = an [RNA fragment]-3'-adenosine-3'-phosphate + a 5'-a hydroxy-guanosine-3'-[RNA fragment].. Its activity is regulated as follows. In contrast to most ribotoxins, activity is completely inhibited by EDTA. Fungal ribonuclease involved in fungal defense. Highly specific and highly toxic fungal endonuclease that cleaves a single phosphodiester bond in the 28S RNA of eukaryotic ribosomes at a universally conserved GAGA tetraloop of the sarcin-ricin loop (SRL). The damage of the SRL inhibits the binding of translation elongation factors and halts protein biosynthesis, ultimately resulting in the death of the target cells. Shows antitumor activity. Exerts cytotoxicity and induces apoptosis towards rat glial cells and human glioma cells, and also displays some activity towards human neurolastoma cell lines. Shows a strong entomotoxicity against Aedes aegypti larvae, yet no nematotoxicity against nematodes. The polypeptide is Ribonuclease ageritin (Cyclocybe aegerita (Black poplar mushroom)).